Reading from the N-terminus, the 472-residue chain is Argininosuccinate lyase (472 aa).

This sequence belongs to the lyase 1 family. Argininosuccinate lyase subfamily.

It localises to the cytoplasm. The enzyme catalyses 2-(N(omega)-L-arginino)succinate = fumarate + L-arginine. It participates in amino-acid biosynthesis; L-arginine biosynthesis; L-arginine from L-ornithine and carbamoyl phosphate: step 3/3. The chain is Argininosuccinate lyase from Synechococcus sp. (strain CC9902).